The following is a 182-amino-acid chain: Probable chorismate pyruvate-lyase (182 aa).

Residues R81, L119, and E171 each coordinate substrate.

It belongs to the UbiC family.

The protein resides in the cytoplasm. The enzyme catalyses chorismate = 4-hydroxybenzoate + pyruvate. Its pathway is cofactor biosynthesis; ubiquinone biosynthesis. Functionally, removes the pyruvyl group from chorismate, with concomitant aromatization of the ring, to provide 4-hydroxybenzoate (4HB) for the ubiquinone pathway. The protein is Probable chorismate pyruvate-lyase of Pseudomonas putida (Arthrobacter siderocapsulatus).